The sequence spans 492 residues: G2/mitotic-specific cyclin CYB1 (492 aa).

A disordered region spans residues 1-176 (MPQVTKTNNE…QPEVGERSQS (176 aa)). A compositionally biased stretch (polar residues) spans 23 to 33 (QESISTIKNTT). Over residues 34-58 (ISNSQHKQQTQQQISSPPQVSVTSS) the composition is skewed to low complexity. A compositionally biased stretch (polar residues) spans 59–83 (EGVSHVNTRQYLGDVSNQYITNAKP). Residues 111–135 (ASDNNNNGSTSSSSNSSNNNNNDAN) show a composition bias toward low complexity.

The protein belongs to the cyclin family. Cyclin AB subfamily.

Its function is as follows. Essential for the control of the cell cycle at the G2/M (mitosis) transition. Interacts with the CDC2 protein kinase to form MPF. G2/M cyclins accumulate steadily during G2 and are abruptly destroyed at mitosis. The protein is G2/mitotic-specific cyclin CYB1 (CYB1) of Candida albicans (Yeast).